Reading from the N-terminus, the 432-residue chain is Glutamate-1-semialdehyde 2,1-aminomutase (432 aa).

Lys270 is modified (N6-(pyridoxal phosphate)lysine).

Belongs to the class-III pyridoxal-phosphate-dependent aminotransferase family. HemL subfamily. Homodimer. Pyridoxal 5'-phosphate is required as a cofactor.

The protein resides in the cytoplasm. The enzyme catalyses (S)-4-amino-5-oxopentanoate = 5-aminolevulinate. Its pathway is porphyrin-containing compound metabolism; protoporphyrin-IX biosynthesis; 5-aminolevulinate from L-glutamyl-tRNA(Glu): step 2/2. The polypeptide is Glutamate-1-semialdehyde 2,1-aminomutase (Acinetobacter baumannii (strain ATCC 17978 / DSM 105126 / CIP 53.77 / LMG 1025 / NCDC KC755 / 5377)).